Here is a 507-residue protein sequence, read N- to C-terminus: RNA-splicing ligase RtcB homolog (507 aa).

Positions 121, 124, 229, 261, and 355 each coordinate Mn(2+). 228-232 (NHYAE) contacts GMP. GMP is bound by residues 355–356 (HN), 404–407 (GGTM), serine 411, 430–433 (HGAG), and lysine 506. Histidine 430 acts as the GMP-histidine intermediate in catalysis.

The protein belongs to the RtcB family. In terms of assembly, catalytic component of the tRNA-splicing ligase complex. It depends on Mn(2+) as a cofactor.

It carries out the reaction a 3'-end 3'-phospho-ribonucleotide-RNA + a 5'-end dephospho-ribonucleoside-RNA + GTP = a ribonucleotidyl-ribonucleotide-RNA + GMP + diphosphate. The enzyme catalyses a 3'-end 2',3'-cyclophospho-ribonucleotide-RNA + a 5'-end dephospho-ribonucleoside-RNA + GTP + H2O = a ribonucleotidyl-ribonucleotide-RNA + GMP + diphosphate + H(+). Functionally, catalytic subunit of the tRNA-splicing ligase complex that acts by directly joining spliced tRNA halves to mature-sized tRNAs by incorporating the precursor-derived splice junction phosphate into the mature tRNA as a canonical 3',5'-phosphodiester. May act as an RNA ligase with broad substrate specificity, and may function toward other RNAs. The chain is RNA-splicing ligase RtcB homolog from Plasmodium yoelii yoelii.